The following is a 75-amino-acid chain: MARFFRRRKFCRFTAEGTKRIDYKDIETLKAYITETGKIVPSRITGTKAKYQRQLATAIKRARYLALIPYTDSHE.

This sequence belongs to the bacterial ribosomal protein bS18 family. Part of the 30S ribosomal subunit. Forms a tight heterodimer with protein bS6.

Its function is as follows. Binds as a heterodimer with protein bS6 to the central domain of the 16S rRNA, where it helps stabilize the platform of the 30S subunit. This chain is Small ribosomal subunit protein bS18, found in Cellvibrio japonicus (strain Ueda107) (Pseudomonas fluorescens subsp. cellulosa).